The primary structure comprises 428 residues: Inward rectifier potassium channel 2 (428 aa).

Over 1 to 81 (MGSVRTNRYS…IFTTCVDIRW (81 aa)) the chain is Cytoplasmic. Cys-76 is modified (S-nitrosocysteine). A helical membrane pass occupies residues 82–106 (RWMLVIFCLAFVLSWLFFGCVFWLI). At 107–128 (ALLHGDLDTSKVSKACVSEVNS) the chain is on the extracellular side. The helical; Pore-forming intramembrane region spans 129–140 (FTAAFLFSIETQ). Residues 141–147 (TTIGYGF) constitute an intramembrane region (pore-forming). The Selectivity filter signature appears at 142–147 (TIGYGF). Residues 148 to 156 (RCVTDECPI) lie on the Extracellular side of the membrane. A helical membrane pass occupies residues 157–178 (AVFMVVFQSIVGCIIDAFIIGA). Topologically, residues 179 to 428 (VMAKMAKPKK…PRPLRRESEI (250 aa)) are cytoplasmic. Residues 181 to 208 (AKMAKPKKRNETLVFSHNAVIAMRDGKL) form a polyphosphoinositide (PIP2)-binding region. The segment at 383 to 428 (TSKEEEEDSENGVPESTSTDSPPGIDLHNQASVPLEPRPLRRESEI) is disordered. A PDZ-binding motif is present at residues 426 to 428 (SEI).

It belongs to the inward rectifier-type potassium channel (TC 1.A.2.1) family. KCNJ2 subfamily. As to quaternary structure, homotetramer. Homomultimeric and heteromultimeric association with KCNJ4/Kir2.3. Can form heteromeric channels with Kir2.6/KCNJ18. Associates, via its PDZ-recognition domain, with a complex containing LIN7A, LIN7B, LIN7C, DLG1, CASK and APBA1. S-nitrosylation increases the open probability and inward rectifying currents. As to expression, prominently expressed in the central nervous system. Also found in other excitable tissues such as heart and skeletal muscle.

The protein resides in the cell membrane. It localises to the sarcolemma. The protein localises to the T-tubule. It carries out the reaction K(+)(in) = K(+)(out). With respect to regulation, activated by phosphatidylinositol 4,5 biphosphate (PtdIns(4,5)P2). In terms of biological role, inward rectifier potassium channels are characterized by a greater tendency to allow potassium to flow into the cell rather than out of it. Their voltage dependence is regulated by the concentration of extracellular potassium; as external potassium is raised, the voltage range of the channel opening shifts to more positive voltages. The inward rectification is mainly due to the blockage of outward current by internal magnesium. Can be blocked by extracellular barium and cesium. Probably participates in establishing action potential waveform and excitability of neuronal and muscle tissues. In Mus musculus (Mouse), this protein is Inward rectifier potassium channel 2 (Kcnj2).